The chain runs to 110 residues: Integration host factor subunit alpha (110 aa).

This sequence belongs to the bacterial histone-like protein family. As to quaternary structure, heterodimer of an alpha and a beta chain.

Functionally, this protein is one of the two subunits of integration host factor, a specific DNA-binding protein that functions in genetic recombination as well as in transcriptional and translational control. The polypeptide is Integration host factor subunit alpha (Nitrobacter hamburgensis (strain DSM 10229 / NCIMB 13809 / X14)).